A 494-amino-acid polypeptide reads, in one-letter code: Protein DETOXIFICATION 21 (494 aa).

An N-acetylalanine modification is found at Ala-2. A run of 12 helical transmembrane segments spans residues 40-60 (LWIVAAPAIFTRFSTFGVSII), 73-95 (LAAYSITFTVLLRFSNGILLGMA), 123-143 (IVLTGCTICLTPVYIFSGPIL), 158-178 (IIALWVIGINFSFVPSFTCQM), 188-208 (IIAYVAAVSLGVHVFLSWLLM), 217-237 (GAMTSTLVAFWLPNIAQLLFV), 268-288 (GGMLCLELWYNSILVLLTGNL), 297-317 (ALAICLNINGLEMMIALGFLA), 340-360 (LTAVFTSLSLGIVLFFVFLFL), 384-404 (LLAFSILMNSVQPVLSGVAVG), 416-436 (LACYYLVGIPIGIILGYVVGL), and 441-461 (VWIGMLFGIFVQTCVLTVMTL).

It belongs to the multi antimicrobial extrusion (MATE) (TC 2.A.66.1) family.

Its subcellular location is the membrane. The sequence is that of Protein DETOXIFICATION 21 from Arabidopsis thaliana (Mouse-ear cress).